Reading from the N-terminus, the 417-residue chain is Cobalamin binding intrinsic factor (417 aa).

The signal sequence occupies residues 1–22 (MAWFSLHLLHLLWAAAGTSTWA). 3 disulfide bridges follow: C26-C246, C103-C288, and C143-C182. N100 carries N-linked (GlcNAc...) asparagine glycosylation. A cob(II)alamin-binding site is contributed by D171. S191 is modified (phosphoserine). N-linked (GlcNAc...) asparagine glycosylation is present at N209. Residues D222 and Q270 each coordinate cob(II)alamin. Residues N311 and N330 are each glycosylated (N-linked (GlcNAc...) asparagine). Residues 365 to 370 (SWGLVV) and 386 to 395 (WQFLSGKTPL) each bind cob(II)alamin. N-linked (GlcNAc...) asparagine glycosylation occurs at N413.

The protein belongs to the eukaryotic cobalamin transport proteins family. As to quaternary structure, interacts with CUBN (via CUB domains).

It is found in the secreted. Its function is as follows. Promotes absorption of the essential vitamin cobalamin (Cbl) in the ileum. After interaction with CUBN, the CBLIF-cobalamin complex is internalized via receptor-mediated endocytosis. The protein is Cobalamin binding intrinsic factor (CBLIF) of Canis lupus familiaris (Dog).